Here is a 122-residue protein sequence, read N- to C-terminus: Large ribosomal subunit protein uL14 (122 aa).

The protein belongs to the universal ribosomal protein uL14 family. Part of the 50S ribosomal subunit. Forms a cluster with proteins L3 and L19. In the 70S ribosome, L14 and L19 interact and together make contacts with the 16S rRNA in bridges B5 and B8.

Functionally, binds to 23S rRNA. Forms part of two intersubunit bridges in the 70S ribosome. The chain is Large ribosomal subunit protein uL14 from Solibacter usitatus (strain Ellin6076).